The chain runs to 395 residues: Elongation factor Tu (395 aa).

The tr-type G domain occupies 10–204; that stretch reads KPHVNIGTIG…AVDNYIPHPV (195 aa). The interval 19–26 is G1; it reads GHVDHGKT. 19–26 contacts GTP; it reads GHVDHGKT. Position 26 (Thr-26) interacts with Mg(2+). Residues 60–64 form a G2 region; that stretch reads GITIS. Positions 81–84 are G3; it reads DCPG. Residues 81–85 and 136–139 each bind GTP; these read DCPGH and NKVD. A G4 region spans residues 136–139; that stretch reads NKVD. The segment at 174–176 is G5; sequence SAL.

This sequence belongs to the TRAFAC class translation factor GTPase superfamily. Classic translation factor GTPase family. EF-Tu/EF-1A subfamily. Monomer.

It localises to the cytoplasm. It catalyses the reaction GTP + H2O = GDP + phosphate + H(+). Functionally, GTP hydrolase that promotes the GTP-dependent binding of aminoacyl-tRNA to the A-site of ribosomes during protein biosynthesis. The protein is Elongation factor Tu of Rickettsia akari (strain Hartford).